The primary structure comprises 337 residues: Ribosomal RNA small subunit methyltransferase H (337 aa).

S-adenosyl-L-methionine-binding positions include glycine 36–histidine 38, aspartate 56, phenylalanine 82, aspartate 100, and glutamine 107. The interval glycine 314 to arginine 337 is disordered.

This sequence belongs to the methyltransferase superfamily. RsmH family.

The protein resides in the cytoplasm. It carries out the reaction cytidine(1402) in 16S rRNA + S-adenosyl-L-methionine = N(4)-methylcytidine(1402) in 16S rRNA + S-adenosyl-L-homocysteine + H(+). In terms of biological role, specifically methylates the N4 position of cytidine in position 1402 (C1402) of 16S rRNA. The chain is Ribosomal RNA small subunit methyltransferase H from Xanthomonas oryzae pv. oryzae (strain PXO99A).